We begin with the raw amino-acid sequence, 218 residues long: Capsid protein (218 aa).

Residue M1 is modified to N-acetylmethionine; by host. A disordered region spans residues 1–28; that stretch reads MDKSESTSAGRNRRRRPRRGSRSAPSSA. Over residues 11 to 21 the composition is skewed to basic residues; the sequence is RNRRRRPRRGS.

The protein belongs to the cucumovirus capsid protein family.

It is found in the virion. Its function is as follows. Capsid protein. Probably binds RNA and plays a role in packaging. The sequence is that of Capsid protein from Cucumis sativus (Cucumber).